A 156-amino-acid chain; its full sequence is MRAGVRIGIDPGDARIGVARSDPSGFLATPVETVRRGKGDLARIGRILAAEEDEGATVLEVVVGLPRSLSGREGPAAAKVREFAGRLAARVAPVPVRLVDERMTTVSAEAMLRDQGRTGGKRRAVVDQAAAVLILQHALDTERATGAAPGEIVEET.

This sequence belongs to the YqgF nuclease family.

The protein resides in the cytoplasm. Could be a nuclease involved in processing of the 5'-end of pre-16S rRNA. The sequence is that of Putative pre-16S rRNA nuclease from Nocardioides sp. (strain ATCC BAA-499 / JS614).